The following is a 426-amino-acid chain: Chaperone SurA (426 aa).

The signal sequence occupies residues 1 to 19; that stretch reads MGRVLVTIFVLFWPIGSFA. PpiC domains are found at residues 169–270 and 280–379; these read DAQY…KLLD and VTQT…QVLD.

The protein resides in the periplasm. It catalyses the reaction [protein]-peptidylproline (omega=180) = [protein]-peptidylproline (omega=0). Chaperone involved in the correct folding and assembly of outer membrane proteins. Recognizes specific patterns of aromatic residues and the orientation of their side chains, which are found more frequently in integral outer membrane proteins. May act in both early periplasmic and late outer membrane-associated steps of protein maturation. This Nitrosococcus oceani (strain ATCC 19707 / BCRC 17464 / JCM 30415 / NCIMB 11848 / C-107) protein is Chaperone SurA.